We begin with the raw amino-acid sequence, 98 residues long: NADH-ubiquinone oxidoreductase chain 4L (98 aa).

3 helical membrane-spanning segments follow: residues M1 to M21, S29 to L49, and I61 to V81.

The protein belongs to the complex I subunit 4L family. Core subunit of respiratory chain NADH dehydrogenase (Complex I) which is composed of 45 different subunits.

The protein resides in the mitochondrion inner membrane. It catalyses the reaction a ubiquinone + NADH + 5 H(+)(in) = a ubiquinol + NAD(+) + 4 H(+)(out). In terms of biological role, core subunit of the mitochondrial membrane respiratory chain NADH dehydrogenase (Complex I) which catalyzes electron transfer from NADH through the respiratory chain, using ubiquinone as an electron acceptor. Part of the enzyme membrane arm which is embedded in the lipid bilayer and involved in proton translocation. The polypeptide is NADH-ubiquinone oxidoreductase chain 4L (MT-ND4L) (Neomonachus schauinslandi (Hawaiian monk seal)).